The sequence spans 386 residues: S-adenosylmethionine synthase (386 aa).

ATP is bound at residue His16. Asp18 is a binding site for Mg(2+). Glu44 lines the K(+) pocket. L-methionine is bound by residues Glu57 and Gln100. The flexible loop stretch occupies residues 100–110 (QSPDINVGVDQ). ATP contacts are provided by residues 164–166 (DGK), 231–232 (RF), Asp240, 246–247 (RK), Ala263, and Lys267. Residue Asp240 coordinates L-methionine. Lys271 provides a ligand contact to L-methionine.

Belongs to the AdoMet synthase family. In terms of assembly, homotetramer; dimer of dimers. Mg(2+) is required as a cofactor. It depends on K(+) as a cofactor.

The protein resides in the cytoplasm. The catalysed reaction is L-methionine + ATP + H2O = S-adenosyl-L-methionine + phosphate + diphosphate. It functions in the pathway amino-acid biosynthesis; S-adenosyl-L-methionine biosynthesis; S-adenosyl-L-methionine from L-methionine: step 1/1. Functionally, catalyzes the formation of S-adenosylmethionine (AdoMet) from methionine and ATP. The overall synthetic reaction is composed of two sequential steps, AdoMet formation and the subsequent tripolyphosphate hydrolysis which occurs prior to release of AdoMet from the enzyme. The chain is S-adenosylmethionine synthase from Sulfurovum sp. (strain NBC37-1).